A 259-amino-acid chain; its full sequence is Thiazole synthase (259 aa).

K99 functions as the Schiff-base intermediate with DXP in the catalytic mechanism. Residues G161, 187–188 (AG), and 209–210 (NT) contribute to the 1-deoxy-D-xylulose 5-phosphate site.

This sequence belongs to the ThiG family. As to quaternary structure, homotetramer. Forms heterodimers with either ThiH or ThiS.

It localises to the cytoplasm. It carries out the reaction [ThiS sulfur-carrier protein]-C-terminal-Gly-aminoethanethioate + 2-iminoacetate + 1-deoxy-D-xylulose 5-phosphate = [ThiS sulfur-carrier protein]-C-terminal Gly-Gly + 2-[(2R,5Z)-2-carboxy-4-methylthiazol-5(2H)-ylidene]ethyl phosphate + 2 H2O + H(+). It functions in the pathway cofactor biosynthesis; thiamine diphosphate biosynthesis. Its function is as follows. Catalyzes the rearrangement of 1-deoxy-D-xylulose 5-phosphate (DXP) to produce the thiazole phosphate moiety of thiamine. Sulfur is provided by the thiocarboxylate moiety of the carrier protein ThiS. In vitro, sulfur can be provided by H(2)S. The polypeptide is Thiazole synthase (Nitratiruptor sp. (strain SB155-2)).